We begin with the raw amino-acid sequence, 87 residues long: Kappa 1a-bungarotoxin (87 aa).

Positions 1-21 are cleaved as a signal peptide; that stretch reads MKTLLLTLVVVTIVCLDLGYT. 5 cysteine pairs are disulfide-bonded: Cys24-Cys42, Cys35-Cys63, Cys48-Cys52, Cys67-Cys79, and Cys80-Cys85.

The protein belongs to the three-finger toxin family. Long-chain subfamily. Kappa-neurotoxin sub-subfamily. In terms of assembly, homo- and heterodimer; non-covalently linked. As to expression, expressed by the venom gland.

The protein resides in the secreted. Its function is as follows. Postsynaptic neurotoxin that binds and inhibits neuronal nicotinic acetylcholine receptors (nAChR) with high affinity (IC(50)&lt;100 nM). Is a selective, and slowly reversible antagonist of alpha-3/CHRNA3-containing and some alpha-4/CHRNA4-containing AChRs. This is Kappa 1a-bungarotoxin from Bungarus candidus (Malayan krait).